A 218-amino-acid polypeptide reads, in one-letter code: Pyridoxine/pyridoxamine 5'-phosphate oxidase (218 aa).

Substrate is bound by residues 14 to 17 (RREY) and K72. Residues 67–72 (RIVLLK), 82–83 (YT), R88, K89, and Q111 each bind FMN. Residues Y129, R133, and S137 each coordinate substrate. Residues 146 to 147 (QS) and W191 each bind FMN. A substrate-binding site is contributed by 197-199 (RLH). An FMN-binding site is contributed by R201.

It belongs to the pyridoxamine 5'-phosphate oxidase family. As to quaternary structure, homodimer. The cofactor is FMN.

The enzyme catalyses pyridoxamine 5'-phosphate + O2 + H2O = pyridoxal 5'-phosphate + H2O2 + NH4(+). It catalyses the reaction pyridoxine 5'-phosphate + O2 = pyridoxal 5'-phosphate + H2O2. It participates in cofactor metabolism; pyridoxal 5'-phosphate salvage; pyridoxal 5'-phosphate from pyridoxamine 5'-phosphate: step 1/1. The protein operates within cofactor metabolism; pyridoxal 5'-phosphate salvage; pyridoxal 5'-phosphate from pyridoxine 5'-phosphate: step 1/1. Catalyzes the oxidation of either pyridoxine 5'-phosphate (PNP) or pyridoxamine 5'-phosphate (PMP) into pyridoxal 5'-phosphate (PLP). The sequence is that of Pyridoxine/pyridoxamine 5'-phosphate oxidase from Escherichia coli O139:H28 (strain E24377A / ETEC).